A 232-amino-acid chain; its full sequence is Jasmonate ZIM domain-containing protein 1 (232 aa).

The interval 1–24 is disordered; sequence MSSFPNTVAEGRRSGKAPEKSTFS. Residues 10 to 19 are compositionally biased toward basic and acidic residues; the sequence is EGRRSGKAPE. In terms of domain architecture, Tify spans 96 to 131; it reads PGPESPQLTIFYAGKMLVFDAFPPEKATEVMEMATK. Composition is skewed to polar residues over residues 133-142 and 158-167; these read ASNNSGTEES and MPQTNTSSET. A disordered region spans residues 133–232; the sequence is ASNNSGTEES…QCSKQFDLNF (100 aa). The Nuclear localization signal signature appears at 182–189; it reads PRRASLLK. Residues 183–205 carry the Jas motif; sequence RRASLLKFLEKRKERVNARGPYQ. Over residues 190–199 the composition is skewed to basic and acidic residues; that stretch reads FLEKRKERVN.

It belongs to the TIFY/JAZ family. In terms of assembly, (Microbial infection) Interacts with the pathogenic Pseudomonas syringae HopZ1a protein; this interaction leads to its degradation. Post-translationally, ubiquitinated. Targeted for degradation by the SCF(COI1) E3 ubiquitin ligase-proteasome pathway during jasmonate signaling. In terms of processing, (Microbial infection) Acetylated by Pseudomonas syringae HopZ1a. Mostly expressed in leaves and flowers and, to a lower extent, in grean pods and roots.

Its subcellular location is the nucleus. The protein localises to the cell membrane. Repressor of jasmonate responses. This Glycine max (Soybean) protein is Jasmonate ZIM domain-containing protein 1.